The following is a 250-amino-acid chain: MNITAIIPARFASTRFPGKALADIAGKPMVQHVYERTARARLVSEVVVATDDDRIAQAVRGFGGRVEMTSRDHETGTDRLAEVASRIGAEIIVNVQGDEPLIEPAMIDEAIAPLAENPAVRMGTLKSRIRTLHDFLSPNVVKVVTDLEGYALYFSRSPLPFFRDKWNDLKDESFASGRLLCYKHVGLYVYRRDFLMEFAKMPPTALELAEKLEQLRALENGCRIRVVETAHESIGVDTPNDLEKVLEKLK.

The protein belongs to the KdsB family.

The protein resides in the cytoplasm. The catalysed reaction is 3-deoxy-alpha-D-manno-oct-2-ulosonate + CTP = CMP-3-deoxy-beta-D-manno-octulosonate + diphosphate. It participates in nucleotide-sugar biosynthesis; CMP-3-deoxy-D-manno-octulosonate biosynthesis; CMP-3-deoxy-D-manno-octulosonate from 3-deoxy-D-manno-octulosonate and CTP: step 1/1. It functions in the pathway bacterial outer membrane biogenesis; lipopolysaccharide biosynthesis. Functionally, activates KDO (a required 8-carbon sugar) for incorporation into bacterial lipopolysaccharide in Gram-negative bacteria. This Geobacter sulfurreducens (strain ATCC 51573 / DSM 12127 / PCA) protein is 3-deoxy-manno-octulosonate cytidylyltransferase.